We begin with the raw amino-acid sequence, 111 residues long: MRVDEFIPDSMKSILTKNTSNTNVINENQTSGDANGTNSVDFGNILNEKLQEVNDKQIDADNTTNAFIQGDDVDVHKVMLSTEEAKLSLELAVQMRNKLVDAYQELNRTQL.

It belongs to the FliE family.

The protein resides in the bacterial flagellum basal body. In Clostridium acetobutylicum (strain ATCC 824 / DSM 792 / JCM 1419 / IAM 19013 / LMG 5710 / NBRC 13948 / NRRL B-527 / VKM B-1787 / 2291 / W), this protein is Flagellar hook-basal body complex protein FliE.